The following is a 930-amino-acid chain: Carnosine synthase 1 (930 aa).

The tract at residues 1–24 (MISVDRLSEEQALGMKEQEWAGPE) is disordered. Residues 624–825 (RPPPAAFSVP…LLLAAVLLAL (202 aa)) enclose the ATP-grasp domain. 650-716 (VPFPAVAKLE…MEYVPGTEHD (67 aa)) contacts ATP. 3 residues coordinate Mg(2+): glutamate 782, glutamate 794, and asparagine 796. Positions 782, 794, and 796 each coordinate Mn(2+).

As to quaternary structure, homotetramer. Requires Mg(2+) as cofactor. The cofactor is Mn(2+).

It carries out the reaction beta-alanine + L-histidine + ATP = carnosine + ADP + phosphate + H(+). The enzyme catalyses 4-aminobutanoate + L-histidine + ATP = L-homocarnosine + ADP + phosphate + H(+). Functionally, catalyzes the synthesis of carnosine and homocarnosine. Carnosine is synthesized more efficiently than homocarnosine. In Gallus gallus (Chicken), this protein is Carnosine synthase 1.